A 237-amino-acid chain; its full sequence is Small ribosomal subunit protein uS3 (237 aa).

Residues 39–107 (IRAYLMEELK…ETHLNIVEVR (69 aa)) form the KH type-2 domain. Residues 213–237 (MASERRATESDNQGGSGRERRRENA) are disordered.

It belongs to the universal ribosomal protein uS3 family. Part of the 30S ribosomal subunit. Forms a tight complex with proteins S10 and S14.

In terms of biological role, binds the lower part of the 30S subunit head. Binds mRNA in the 70S ribosome, positioning it for translation. This Rhizobium meliloti (strain 1021) (Ensifer meliloti) protein is Small ribosomal subunit protein uS3.